Here is a 541-residue protein sequence, read N- to C-terminus: Chaperonin GroEL (541 aa).

ATP-binding positions include 29 to 32 (TLGP), 86 to 90 (DGTTT), glycine 413, 476 to 478 (NAA), and aspartate 492. Residues 521–541 (KPEDNPAPAAPAANPGMGGMM) form a disordered region. A compositionally biased stretch (low complexity) spans 526 to 535 (PAPAAPAANP).

It belongs to the chaperonin (HSP60) family. Forms a cylinder of 14 subunits composed of two heptameric rings stacked back-to-back. Interacts with the co-chaperonin GroES.

Its subcellular location is the cytoplasm. The enzyme catalyses ATP + H2O + a folded polypeptide = ADP + phosphate + an unfolded polypeptide.. Functionally, together with its co-chaperonin GroES, plays an essential role in assisting protein folding. The GroEL-GroES system forms a nano-cage that allows encapsulation of the non-native substrate proteins and provides a physical environment optimized to promote and accelerate protein folding. The sequence is that of Chaperonin GroEL from Levilactobacillus brevis (strain ATCC 367 / BCRC 12310 / CIP 105137 / JCM 1170 / LMG 11437 / NCIMB 947 / NCTC 947) (Lactobacillus brevis).